The sequence spans 447 residues: Lipid II isoglutaminyl synthase (glutamine-hydrolyzing) subunit MurT (447 aa).

Residues C205, C208, C227, and C230 each coordinate Zn(2+). D355 is an active-site residue.

The protein belongs to the MurCDEF family. MurT subfamily. As to quaternary structure, forms a heterodimer with GatD.

It catalyses the reaction beta-D-GlcNAc-(1-&gt;4)-Mur2Ac(oyl-L-Ala-gamma-D-Glu-L-Lys-D-Ala-D-Ala)-di-trans,octa-cis-undecaprenyl diphosphate + L-glutamine + ATP + H2O = beta-D-GlcNAc-(1-&gt;4)-Mur2Ac(oyl-L-Ala-D-isoglutaminyl-L-Lys-D-Ala-D-Ala)-di-trans,octa-cis-undecaprenyl diphosphate + L-glutamate + ADP + phosphate + H(+). It carries out the reaction beta-D-GlcNAc-(1-&gt;4)-Mur2Ac(oyl-L-Ala-gamma-D-Glu-L-Lys-D-Ala-D-Ala)-di-trans,octa-cis-undecaprenyl diphosphate + ATP = beta-D-GlcNAc-(1-&gt;4)-Mur2Ac(oyl-L-Ala-gamma-D-O-P-Glu-L-Lys-D-Ala-D-Ala)-di-trans,octa-cis-undecaprenyl diphosphate + ADP. The catalysed reaction is beta-D-GlcNAc-(1-&gt;4)-Mur2Ac(oyl-L-Ala-gamma-D-O-P-Glu-L-Lys-D-Ala-D-Ala)-di-trans,octa-cis-undecaprenyl diphosphate + NH4(+) = beta-D-GlcNAc-(1-&gt;4)-Mur2Ac(oyl-L-Ala-D-isoglutaminyl-L-Lys-D-Ala-D-Ala)-di-trans,octa-cis-undecaprenyl diphosphate + phosphate + H(+). Its pathway is cell wall biogenesis; peptidoglycan biosynthesis. Its function is as follows. The lipid II isoglutaminyl synthase complex catalyzes the formation of alpha-D-isoglutamine in the cell wall lipid II stem peptide. The MurT subunit catalyzes the ATP-dependent amidation of D-glutamate residue of lipid II, converting it to an isoglutamine residue. In Streptococcus pneumoniae (strain ATCC BAA-255 / R6), this protein is Lipid II isoglutaminyl synthase (glutamine-hydrolyzing) subunit MurT.